A 165-amino-acid polypeptide reads, in one-letter code: Xanthine-guanine phosphoribosyltransferase (165 aa).

5-phospho-alpha-D-ribose 1-diphosphate-binding positions include 41 to 42 (RG) and 98 to 106 (DDLTDTGKT). Aspartate 99 serves as a coordination point for Mg(2+). Guanine-binding residues include aspartate 102 and isoleucine 145. Residues aspartate 102 and isoleucine 145 each coordinate xanthine. GMP is bound by residues 102–106 (DTGKT) and 144–145 (WI).

It belongs to the purine/pyrimidine phosphoribosyltransferase family. XGPT subfamily. In terms of assembly, homotetramer. It depends on Mg(2+) as a cofactor.

The protein resides in the cell inner membrane. It catalyses the reaction GMP + diphosphate = guanine + 5-phospho-alpha-D-ribose 1-diphosphate. The enzyme catalyses XMP + diphosphate = xanthine + 5-phospho-alpha-D-ribose 1-diphosphate. It carries out the reaction IMP + diphosphate = hypoxanthine + 5-phospho-alpha-D-ribose 1-diphosphate. Its pathway is purine metabolism; GMP biosynthesis via salvage pathway; GMP from guanine: step 1/1. The protein operates within purine metabolism; XMP biosynthesis via salvage pathway; XMP from xanthine: step 1/1. In terms of biological role, purine salvage pathway enzyme that catalyzes the transfer of the ribosyl-5-phosphate group from 5-phospho-alpha-D-ribose 1-diphosphate (PRPP) to the N9 position of the 6-oxopurines guanine and xanthine to form the corresponding ribonucleotides GMP (guanosine 5'-monophosphate) and XMP (xanthosine 5'-monophosphate), with the release of PPi. To a lesser extent, also acts on hypoxanthine. The polypeptide is Xanthine-guanine phosphoribosyltransferase (Rhizobium meliloti (strain 1021) (Ensifer meliloti)).